A 914-amino-acid polypeptide reads, in one-letter code: Valine--tRNA ligase (914 aa).

Positions 45–55 match the 'HIGH' region motif; sequence PNVTGSLHMGH. The short motif at 538-542 is the 'KMSKS' region element; that stretch reads KMSKS. Lysine 541 is an ATP binding site. Residues 847 to 914 adopt a coiled-coil conformation; sequence LVDLDALKGR…LARKRLADLS (68 aa).

The protein belongs to the class-I aminoacyl-tRNA synthetase family. ValS type 1 subfamily. Monomer.

It is found in the cytoplasm. The enzyme catalyses tRNA(Val) + L-valine + ATP = L-valyl-tRNA(Val) + AMP + diphosphate. In terms of biological role, catalyzes the attachment of valine to tRNA(Val). As ValRS can inadvertently accommodate and process structurally similar amino acids such as threonine, to avoid such errors, it has a 'posttransfer' editing activity that hydrolyzes mischarged Thr-tRNA(Val) in a tRNA-dependent manner. The sequence is that of Valine--tRNA ligase from Parasynechococcus marenigrum (strain WH8102).